The following is a 106-amino-acid chain: Met repressor (106 aa).

This sequence belongs to the MetJ family. In terms of assembly, homodimer.

Its subcellular location is the cytoplasm. This regulatory protein, when combined with SAM (S-adenosylmethionine) represses the expression of the methionine regulon and of enzymes involved in SAM synthesis. This is Met repressor from Vibrio campbellii (strain ATCC BAA-1116).